A 360-amino-acid polypeptide reads, in one-letter code: uncharacterized protein (360 aa).

The span at 22-32 shows a compositional bias: acidic residues; sequence EEDVEPNEEAE. The disordered stretch occupies residues 22 to 55; that stretch reads EEDVEPNEEAEGPGGVHKKRRGARKKNRRQRMEG. Positions 37 to 50 are enriched in basic residues; it reads VHKKRRGARKKNRR.

This is an uncharacterized protein from Caenorhabditis elegans.